Here is a 241-residue protein sequence, read N- to C-terminus: Probable transcriptional regulatory protein Rpic_2388 (241 aa).

It belongs to the TACO1 family.

The protein localises to the cytoplasm. The polypeptide is Probable transcriptional regulatory protein Rpic_2388 (Ralstonia pickettii (strain 12J)).